The following is a 417-amino-acid chain: MRALEVSEINAQIKSILESTFMDICVRGEISNVTIHTSGHIYLTLKDESSSVRCVMFKGNARNLKIKLEVGQSVLIMGSLSVYVPKGEYQILCKSITLAGLGELSQAYEALKTKLGAKGYFESAHKKPLPRFPKRIALLTSATGAAKEDMLKVAHKRWNLVHITLFNTLVQGEGAKDSIVENLKRADSFFGTSESFDVIVLGRGGGSMEDMWAFNEECVADAIYSARTPIISAVGHEVDVFISDFVADVRAPTPSAAMEILLPDKNEYLRVLDEIMNSYFYALKQQFVLKSQALERMREYFKLYNFEQRYCAKVEQINIFQQMMRDSMNAVLEDKMLKYEHIFLSLNARCEEKLQQCQYEYERMLEVFNALNPHSLSTRGYAQISKEGKPCRLSDIDINEEFYLSDMTHSILAKRLQ.

The protein belongs to the XseA family. Heterooligomer composed of large and small subunits.

It is found in the cytoplasm. It carries out the reaction Exonucleolytic cleavage in either 5'- to 3'- or 3'- to 5'-direction to yield nucleoside 5'-phosphates.. Bidirectionally degrades single-stranded DNA into large acid-insoluble oligonucleotides, which are then degraded further into small acid-soluble oligonucleotides. This is Exodeoxyribonuclease 7 large subunit from Helicobacter hepaticus (strain ATCC 51449 / 3B1).